The following is a 92-amino-acid chain: Small ribosomal subunit protein bS20 (92 aa).

The segment covering 1–21 has biased composition (basic and acidic residues); that stretch reads MPLHKSAEKRLRQAARRNERN. Disordered stretches follow at residues 1–26 and 73–92; these read MPLH…ARKK and ASRK…PTAS. A compositionally biased stretch (polar residues) spans 82–92; sequence KALNNYTPTAS.

The protein belongs to the bacterial ribosomal protein bS20 family.

In terms of biological role, binds directly to 16S ribosomal RNA. This chain is Small ribosomal subunit protein bS20, found in Chlorobaculum tepidum (strain ATCC 49652 / DSM 12025 / NBRC 103806 / TLS) (Chlorobium tepidum).